Here is a 427-residue protein sequence, read N- to C-terminus: Fc receptor-like B (427 aa).

The N-terminal stretch at 1–17 (MWMLAALLLLVPRSGKA) is a signal peptide. Ig-like C2-type domains are found at residues 23-101 (PVLT…LSVS) and 103-189 (DWLI…VAVT). 2 cysteine pairs are disulfide-bonded: cysteine 44-cysteine 85 and cysteine 124-cysteine 168. N-linked (GlcNAc...) asparagine glycosylation is present at asparagine 152. Residues 401-418 (TPETPNSHVTVNPATPET) show a composition bias toward polar residues. Residues 401-427 (TPETPNSHVTVNPATPETTVMEGRVDS) form a disordered region.

Expressed at low levels. Expressed in B-lymphocytes. Detected in spleen, lymph node, kidney, lung and brain.

The protein localises to the cytoplasm. It is found in the endoplasmic reticulum. The chain is Fc receptor-like B (Fcrlb) from Mus musculus (Mouse).